The sequence spans 341 residues: L-threonine 3-dehydrogenase (341 aa).

Position 38 (cysteine 38) interacts with Zn(2+). Active-site charge relay system residues include threonine 40 and histidine 43. Positions 63, 64, 93, 96, 99, and 107 each coordinate Zn(2+). NAD(+) is bound by residues isoleucine 175, aspartate 195, arginine 200, 262–264 (LGI), and 286–287 (IY).

This sequence belongs to the zinc-containing alcohol dehydrogenase family. As to quaternary structure, homotetramer. Zn(2+) is required as a cofactor.

The protein localises to the cytoplasm. The catalysed reaction is L-threonine + NAD(+) = (2S)-2-amino-3-oxobutanoate + NADH + H(+). The protein operates within amino-acid degradation; L-threonine degradation via oxydo-reductase pathway; glycine from L-threonine: step 1/2. Functionally, catalyzes the NAD(+)-dependent oxidation of L-threonine to 2-amino-3-ketobutyrate. The sequence is that of L-threonine 3-dehydrogenase from Shewanella sp. (strain W3-18-1).